A 2360-amino-acid polypeptide reads, in one-letter code: DNA (cytosine-5-)-methyltransferase DMT5 (2360 aa).

The SAM-dependent MTase C5-type domain occupies 48 to 507; that stretch reads FTVGTMCSGT…LCILIAERQV (460 aa). The active site involves Cys146. The region spanning 1258–1575 is the Helicase ATP-binding domain; that stretch reads AEVVNRARGG…CAIADLVNMH (318 aa). 1271–1278 contributes to the ATP binding site; sequence HDVGFGKT. The tract at residues 1451 to 1498 is disordered; it reads SRRKDQKSKATARTQRAKKKSKKPRRTAAAAAESDHSAESDSDSAMDD. Positions 1465 to 1476 are enriched in basic residues; sequence QRAKKKSKKPRR. The RING-type; degenerate zinc finger occupies 2018–2070; sequence CSVCGSQDNTEMKDLSLFITCGHLLCSGCVAAHEHQHGQAESTTGEVLCPVDS. Positions 2102–2267 constitute a Helicase C-terminal domain; that stretch reads KVMKILDVIR…RMPLDDLDYK (166 aa).

The protein in the N-terminal section; belongs to the class I-like SAM-binding methyltransferase superfamily. C5-methyltransferase family. This sequence in the C-terminal section; belongs to the SNF2/RAD54 helicase family.

It is found in the nucleus. The protein resides in the chromosome. The enzyme catalyses a 2'-deoxycytidine in DNA + S-adenosyl-L-methionine + ATP + H2O = a 5-methyl-2'-deoxycytidine in DNA + S-adenosyl-L-homocysteine + ADP + phosphate + 2 H(+). In terms of biological role, may play a role in cytosine methylation at palindromic 5'-CG-3' and 5'-C[ACT]G-3' sites in DNA. The polypeptide is DNA (cytosine-5-)-methyltransferase DMT5 (Verticillium dahliae (strain VdLs.17 / ATCC MYA-4575 / FGSC 10137) (Verticillium wilt)).